The primary structure comprises 194 residues: uncharacterized protein (194 aa).

To A.rhizogenes plasmid pRia4B ORF-3 in virA region.

This is an uncharacterized protein from Sinorhizobium fredii (strain NBRC 101917 / NGR234).